Reading from the N-terminus, the 343-residue chain is Ribonucleoside-diphosphate reductase small subunit (343 aa).

Fe cation is bound by residues Asp-101, Glu-131, and His-134. The active site involves Tyr-138. Residues 188–208 (ILMILIEGIFFSASFAAIAYL) traverse the membrane as a helical segment. Residues Glu-194, Glu-228, and His-231 each contribute to the Fe cation site.

It belongs to the ribonucleoside diphosphate reductase small chain family. As to quaternary structure, heterotetramer composed of a homodimer of the large subunit (R1) and a homodimer of the small subunit (R2). Larger multisubunit protein complex are also active, composed of (R1)n(R2)n. Fe cation is required as a cofactor.

It localises to the host membrane. The enzyme catalyses a 2'-deoxyribonucleoside 5'-diphosphate + [thioredoxin]-disulfide + H2O = a ribonucleoside 5'-diphosphate + [thioredoxin]-dithiol. Ribonucleoside-diphosphate reductase holoenzyme provides the precursors necessary for viral DNA synthesis. Allows virus growth in non-dividing cells, as well as reactivation from latency in infected hosts. Catalyzes the biosynthesis of deoxyribonucleotides from the corresponding ribonucleotides. This chain is Ribonucleoside-diphosphate reductase small subunit, found in Gallid herpesvirus 2 (strain Chicken/Md5/ATCC VR-987) (GaHV-2).